Here is a 423-residue protein sequence, read N- to C-terminus: MDRAIDIDFRTISVVGLGYIGLPTATVLASRQREVIGVDINQHAVDTINQGRIHIVEPDLDMLVRAAVSQGYLRATTEPEPADAFLIAVPTPFLDNKQPDLSYIEAAARAIAPVLKRGDLVVLESTSPVGATEQLSDWLSAQRPDLSFPHQQGEESDIRVAHCPERVLPGHVLRELVENDRIIGGMTPKCSEAAQRLYELFVRGRCIVTDARTAEMCKLTENAFRDVNIAFANELSMICDEIGVNVWELISVANRHPRVNILQPGPGVGGHCIAVDPWFIVDAAPESARLIRTAREVNDAKPHYVLDRVKQAARRFKEPVIACFGLSFKANIDDLRESPAIEIVQTMVQQQLGTVLVVEPHIKVLPAALQGVELLNAEAALSRADIVVLLVDHQQFRKLDTDRLQSRVVIDTRGMWSAKRIAA.

11-28 (TISVVGLGYIGLPTATVL) is a binding site for NAD(+). Lysine 218 serves as the catalytic Proton donor/acceptor. The active-site Nucleophile is the cysteine 272.

Belongs to the UDP-glucose/GDP-mannose dehydrogenase family.

Probably involved in the synthesis of sugar components of EPS I, by converting NDP-N-acetyl-D-galactosamine into NDP-N-acetyl-D-galactosaminuronic acid. This Ralstonia nicotianae (strain ATCC BAA-1114 / GMI1000) (Ralstonia solanacearum) protein is NDP-N-acetyl-D-galactosaminuronic acid dehydrogenase (epsD).